Consider the following 205-residue polypeptide: GTP cyclohydrolase-2 (205 aa).

49–53 (RIHSE) is a GTP binding site. Residues Cys-54, Cys-65, and Cys-67 each coordinate Zn(2+). Residues Gln-70, 92 to 94 (EGR), and Thr-114 contribute to the GTP site. Catalysis depends on Asp-126, which acts as the Proton acceptor. Arg-128 acts as the Nucleophile in catalysis. Residues Thr-149 and Lys-154 each coordinate GTP.

This sequence belongs to the GTP cyclohydrolase II family. It depends on Zn(2+) as a cofactor.

The enzyme catalyses GTP + 4 H2O = 2,5-diamino-6-hydroxy-4-(5-phosphoribosylamino)-pyrimidine + formate + 2 phosphate + 3 H(+). The protein operates within cofactor biosynthesis; riboflavin biosynthesis; 5-amino-6-(D-ribitylamino)uracil from GTP: step 1/4. In terms of biological role, catalyzes the conversion of GTP to 2,5-diamino-6-ribosylamino-4(3H)-pyrimidinone 5'-phosphate (DARP), formate and pyrophosphate. This chain is GTP cyclohydrolase-2, found in Shewanella denitrificans (strain OS217 / ATCC BAA-1090 / DSM 15013).